The primary structure comprises 321 residues: tRNA U34 carboxymethyltransferase (321 aa).

Carboxy-S-adenosyl-L-methionine-binding positions include lysine 90, tryptophan 104, lysine 109, glycine 129, aspartate 151–threonine 153, isoleucine 180–glutamate 181, methionine 195, tyrosine 199, and arginine 314.

It belongs to the class I-like SAM-binding methyltransferase superfamily. CmoB family. In terms of assembly, homotetramer.

It carries out the reaction carboxy-S-adenosyl-L-methionine + 5-hydroxyuridine(34) in tRNA = 5-carboxymethoxyuridine(34) in tRNA + S-adenosyl-L-homocysteine + H(+). Its function is as follows. Catalyzes carboxymethyl transfer from carboxy-S-adenosyl-L-methionine (Cx-SAM) to 5-hydroxyuridine (ho5U) to form 5-carboxymethoxyuridine (cmo5U) at position 34 in tRNAs. The sequence is that of tRNA U34 carboxymethyltransferase from Histophilus somni (strain 2336) (Haemophilus somnus).